Here is a 5900-residue protein sequence, read N- to C-terminus: Midasin (5900 aa).

The tract at residues 250 to 270 is disordered; sequence GSSVKSKKGGEQQQEGEGEDE. AAA-ATPase protomer regions lie at residues 278 to 583, 673 to 1012, 1101 to 1346, 1411 to 1721, 1840 to 2089, and 2167 to 2451; these read TNTV…LRKQ, EKIS…ALNY, PIIP…IAGY, IVWT…MDKQ, RGMQ…HVLT, and LENI…EIYM. Residues 302–309 and 689–696 contribute to the ATP site; these read GVTGSGKT and GETGTGKT. The tract at residues 796–826 is disordered; it reads QTTTNNTKENNNNNNNNNNNNNNNNNNKKRT. The segment covering 797–821 has biased composition (low complexity); that stretch reads TTTNNTKENNNNNNNNNNNNNNNNN. ATP-binding positions include 1135–1142, 1438–1445, 1852–1859, and 2184–2191; these read GPTSSGKT, GETGCSKT, GSPGVGKT, and GPTSTSKT. The linker stretch occupies residues 2562–4965; the sequence is ESAIKSILCE…EGKGKKDVSD (2404 aa). Positions 4932 to 5598 are disordered; it reads GDDGEGGEGG…SVEEKKLTRE (667 aa). Over residues 4984–5008 the composition is skewed to acidic residues; sequence KDEDEDEEKEEKDEDEGFDMQDDFE. The span at 5009–5055 shows a compositional bias: basic and acidic residues; sequence GEMHDIKKDENKDEDKKDDPNNEKENDKEMGDLEKPEDNVVDEKLWD. Residues 5056 to 5076 show a composition bias toward acidic residues; that stretch reads EQDVQDEEEQDEEGKGDETNS. Residues 5079–5113 are compositionally biased toward basic and acidic residues; that stretch reads MMAKQDGKDDNDDDKKDDDKKDDKKKKKEENGKPD. Composition is skewed to acidic residues over residues 5114–5130 and 5139–5156; these read ENEE…EDGK and GASD…DDVI. A compositionally biased stretch (basic and acidic residues) spans 5159 to 5173; that stretch reads EQEKEENHGDPRGDD. Residues 5174-5199 are compositionally biased toward acidic residues; it reads QMEIPEDLELEDPDEGKEDDEQQDGG. Over residues 5213–5224 the composition is skewed to basic and acidic residues; it reads DVSKEEEKKKEL. Acidic residues-rich tracts occupy residues 5225 to 5255 and 5273 to 5286; these read DGDE…EDKE and EGDE…EEDQ. The span at 5297–5313 shows a compositional bias: basic and acidic residues; it reads ETPKDSEQPLGVKDKTG. Over residues 5339–5349 the composition is skewed to polar residues; it reads GMTQPTPSEND. Residues 5410 to 5442 show a composition bias toward basic and acidic residues; that stretch reads SEPKEKAPKQDPNAKENENQDYEFIKDDEKLDK. Positions 5448 to 5460 are enriched in low complexity; it reads QALAAATDTQLQD. The segment covering 5469-5487 has biased composition (acidic residues); that stretch reads DQAEQEEDQMDIDEEDDMD. Basic and acidic residues-rich tracts occupy residues 5488–5536 and 5551–5570; these read VDHK…KDQQ and QFTK…KAVL. Residues 5571–5590 are compositionally biased toward acidic residues; it reads DDGDDQEMEQDGDQDDEESV. Residues 5696-5889 form the VWFA domain; that stretch reads QVLLAIDDTE…NIPSILSDTL (194 aa).

It belongs to the midasin family. In terms of assembly, associates with pre-60S ribosomes in the nucleoplasm.

It localises to the nucleus. The protein resides in the nucleolus. Its subcellular location is the nucleoplasm. Its function is as follows. Nuclear chaperone required for maturation and nuclear export of pre-60S ribosome subunits. Functions at successive maturation steps to remove ribosomal factors at critical transition points, first driving the exit of early pre-60S particles from the nucleolus and then driving late pre-60S particles from the nucleus. This Dictyostelium discoideum (Social amoeba) protein is Midasin (mdn1).